The sequence spans 216 residues: Octanoyltransferase (216 aa).

One can recognise a BPL/LPL catalytic domain in the interval 35 to 213 (NSNPDFIWIG…TIEEEFNFDF (179 aa)). Residues 77–84 (RGGEVTCH), 144–146 (SIG), and 157–159 (GFS) each bind substrate. Cys-175 serves as the catalytic Acyl-thioester intermediate.

Belongs to the LipB family.

The protein localises to the cytoplasm. It catalyses the reaction octanoyl-[ACP] + L-lysyl-[protein] = N(6)-octanoyl-L-lysyl-[protein] + holo-[ACP] + H(+). It participates in protein modification; protein lipoylation via endogenous pathway; protein N(6)-(lipoyl)lysine from octanoyl-[acyl-carrier-protein]: step 1/2. Its function is as follows. Catalyzes the transfer of endogenously produced octanoic acid from octanoyl-acyl-carrier-protein onto the lipoyl domains of lipoate-dependent enzymes. Lipoyl-ACP can also act as a substrate although octanoyl-ACP is likely to be the physiological substrate. This chain is Octanoyltransferase, found in Prochlorococcus marinus (strain MIT 9301).